The chain runs to 186 residues: MLALISRLLDWFRSLFWKEEMELTLVGLQYSGKTTFVNVIASGQFSEDMIPTVGFNMRKVTKGNVTIKIWDIGGQPRFRSMWERYCRGVNAIVYMIDAADREKIEASRNELHNLLDKPQLQGIPVLVLGNKRDLPNALDEKQLIEKMNLSAIQDREICCYSISCKEKDNIDITLQWLIQHSKSRRS.

Met1 carries the N-acetylmethionine modification. An intramembrane region (note=Mediates targeting to membranes) is located at residues 1-19 (MLALISRLLDWFRSLFWKE). Residues 29–35 (QYSGKTT), 71–75 (DIGGQ), and 130–133 (NKRD) contribute to the GTP site. Lys141 participates in a covalent cross-link: Glycyl lysine isopeptide (Lys-Gly) (interchain with G-Cter in ubiquitin).

The protein belongs to the small GTPase superfamily. Arf family. Interacts with tubulin. Interacts with BORCS5; recruits ARL8B to lysosomes. Interacts with VPS41; the interaction mediates the recruitment of the HOPS complex to lysosomes. Interacts (GTP-bound form) with PLEKHM2 (via RUN domain); the interaction is required to recruit the motor protein kinesin-1 on lysosomes. Interacts (GTP-bound form) with PLEKHM1 (via RUN domain); the interaction is required for PLEKHM1 localization to lysosomes and for ARL8B function in delivery and degradation of endocytic and autophagic cargo in lysosomes. PLEKHM1 and PLEKHM2 compete for interaction with ARL8B. Interacts (GTP-bound form) with RUFY1; the interaction is required for RUFY1 endosomal location. When GTP-bound, interacts with RUFY3 and RUFY4, but not with RUFY1, nor RUFY2. In terms of processing, ubiquitinated at Lys-141 by RNF167, leading to its degradation. In terms of tissue distribution, ubiquitously expressed.

The protein resides in the late endosome membrane. Its subcellular location is the lysosome membrane. It is found in the cytoplasm. It localises to the cytoskeleton. The protein localises to the spindle. The protein resides in the cell projection. Its subcellular location is the axon. It is found in the synapse. It localises to the cytolytic granule membrane. The protein localises to the early endosome membrane. The catalysed reaction is GTP + H2O = GDP + phosphate + H(+). Small GTPase which cycles between active GTP-bound and inactive GDP-bound states. In its active state, binds to a variety of effector proteins playing a key role in the regulation of lysosomal positioning which is important for nutrient sensing, natural killer cell-mediated cytotoxicity and antigen presentation. Along with its effectors, orchestrates lysosomal transport and fusion. Localizes specifically to lysosomal membranes and mediates anterograde lysosomal motility by recruiting PLEKHM2, which in turn recruits the motor protein kinesin-1 on lysosomes. Required for lysosomal and cytolytic granule exocytosis. Critical factor involved in NK cell-mediated cytotoxicity. Drives the polarization of cytolytic granules and microtubule-organizing centers (MTOCs) toward the immune synapse between effector NK lymphocytes and target cells. In neurons, mediates the anterograde axonal long-range transport of presynaptic lysosome-related vesicles required for presynaptic biogenesis and synaptic function. Also acts as a regulator of endosome to lysosome trafficking pathways of special significance for host defense. Recruits RUFY1 onto early endosomes regulating endosomes to trans-Golgi network proteins retrieval. Regulates cargo trafficking to lysosomes by binding to PLEKHM1 and recruiting the HOPS subunit VPS41, resulting in functional assembly of the HOPS complex on lysosomal membranes. Plays an important role in cargo delivery to lysosomes for antigen presentation and microbial killing. Directs the intersection of CD1d with lipid antigens in lysosomes, and plays a role in intersecting phagosomes with lysosomes to generate phagolysosomes that kill microbes. Involved in the process of MHC II presentation. Regulates the delivery of antigens to lysosomes and the formation of MHC II-peptide complexes through the recruitment of the HOPS complex to lysosomes allowing the fusion of late endosomes to lysosomes. May play a role in chromosome segregation. Functionally, (Microbial infection) During Mycobacterium tuberculosis (Mtb) infection, is required for plasma membrane repair by controlling the exocytosis of lysosomes in macrophages. ARL8B secretion pathway is crucial to control the type of cell death of the M.tuberculosis-infected macrophages, distinguishing avirulent from virulent Mtb induced necrotic cell death. Its function is as follows. (Microbial infection) During infection, coronaviruses such as SARS-CoV-2 and the chaperone HSPA5/GRP78 are probably co-released through ARL8B-dependent lysosomal exocytic pathway for unconventional egress. The chain is ADP-ribosylation factor-like protein 8B from Homo sapiens (Human).